Consider the following 553-residue polypeptide: CDP-diacylglycerol--glycerol-3-phosphate 3-phosphatidyltransferase, mitochondrial (553 aa).

Residues 1–25 (MAAPAAGPVFWRRLLGLLPGRPGLA) constitute a mitochondrion transit peptide. A Phosphoserine modification is found at S46. 121-128 (ASLYLGTG) serves as a coordination point for ATP. PLD phosphodiesterase domains are found at residues 212 to 238 (TIGL…SDSY) and 457 to 490 (RGWT…GYRS). Residues H217, K219, and D224 contribute to the active site.

It belongs to the CDP-alcohol phosphatidyltransferase class-II family. Widely expressed with higher expression in testis, liver and brain.

It localises to the mitochondrion. It carries out the reaction a CDP-1,2-diacyl-sn-glycerol + sn-glycerol 3-phosphate = a 1,2-diacyl-sn-glycero-3-phospho-(1'-sn-glycero-3'-phosphate) + CMP + H(+). It functions in the pathway phospholipid metabolism; phosphatidylglycerol biosynthesis; phosphatidylglycerol from CDP-diacylglycerol: step 1/2. Its activity is regulated as follows. Activated by calcium and magnesium and inhibited by other bivalent cations. Functions in the biosynthesis of the anionic phospholipids phosphatidylglycerol and cardiolipin. In Mus musculus (Mouse), this protein is CDP-diacylglycerol--glycerol-3-phosphate 3-phosphatidyltransferase, mitochondrial (Pgs1).